The primary structure comprises 286 residues: 4-diphosphocytidyl-2-C-methyl-D-erythritol kinase (286 aa).

Residue lysine 11 is part of the active site. 94–104 (PMGGGIGGGSS) is an ATP binding site. Residue aspartate 136 is part of the active site.

Belongs to the GHMP kinase family. IspE subfamily.

It catalyses the reaction 4-CDP-2-C-methyl-D-erythritol + ATP = 4-CDP-2-C-methyl-D-erythritol 2-phosphate + ADP + H(+). The protein operates within isoprenoid biosynthesis; isopentenyl diphosphate biosynthesis via DXP pathway; isopentenyl diphosphate from 1-deoxy-D-xylulose 5-phosphate: step 3/6. In terms of biological role, catalyzes the phosphorylation of the position 2 hydroxy group of 4-diphosphocytidyl-2C-methyl-D-erythritol. The polypeptide is 4-diphosphocytidyl-2-C-methyl-D-erythritol kinase (Pseudomonas putida (strain ATCC 47054 / DSM 6125 / CFBP 8728 / NCIMB 11950 / KT2440)).